Here is a 608-residue protein sequence, read N- to C-terminus: UvrABC system protein C (608 aa).

A GIY-YIG domain is found at 13 to 91 (HDPGVYRMFD…IKTFQPRYNV (79 aa)). A UVR domain is found at 201-236 (QQVLDHLIGKMERASRALNFEEAARYRDQIQAVRSV).

The protein belongs to the UvrC family. In terms of assembly, interacts with UvrB in an incision complex.

It localises to the cytoplasm. In terms of biological role, the UvrABC repair system catalyzes the recognition and processing of DNA lesions. UvrC both incises the 5' and 3' sides of the lesion. The N-terminal half is responsible for the 3' incision and the C-terminal half is responsible for the 5' incision. The protein is UvrABC system protein C of Mannheimia succiniciproducens (strain KCTC 0769BP / MBEL55E).